A 401-amino-acid chain; its full sequence is MSSYNLPDDKGHFEQYGGIFTAETLMIAVTELKDAYAKFKDDEDFIREFEQDLKHYVGRETPLYHAQNLSKKLDGAQIYLKREDLNHTGAHKINNTIGQALLAKRMGKTRIIAETGAGQHGVATATVAARLGLECVVYMGEVDVARQALNVFRMKLLGATVIPVTLGSKTLKDSINEAMRDWVTNIDDTFYIIGTVVGPHPYPMMVRDFQSIIGKETKVQFAAQVGGLPDVLVACVGGGSNAIGLFHAFIDDASVEIYGVEAAGYGLEKGPTAHSAPLCAGSVGVLHGNRTYLMEDENGQIIEGHSISAGLDYPGVGPEHAYLKDSGRARYVAITDKEALEAFHVLTKVEGILPALESSHAVAYGIKLAKELGKDKHIIINLSGRGDKDIHTIAQIEGIEF.

N6-(pyridoxal phosphate)lysine is present on Lys-92.

Belongs to the TrpB family. In terms of assembly, tetramer of two alpha and two beta chains. It depends on pyridoxal 5'-phosphate as a cofactor.

The catalysed reaction is (1S,2R)-1-C-(indol-3-yl)glycerol 3-phosphate + L-serine = D-glyceraldehyde 3-phosphate + L-tryptophan + H2O. Its pathway is amino-acid biosynthesis; L-tryptophan biosynthesis; L-tryptophan from chorismate: step 5/5. Its function is as follows. The beta subunit is responsible for the synthesis of L-tryptophan from indole and L-serine. This Ruthia magnifica subsp. Calyptogena magnifica protein is Tryptophan synthase beta chain.